The sequence spans 558 residues: NAD(P)H-quinone oxidoreductase chain 4 (558 aa).

The next 15 helical transmembrane spans lie at 25 to 45 (FPWLSLSILFPIVGAFIVPFV), 56 to 76 (WFALGIALTTFLITAAAYLTG), 90 to 110 (VSWLPNLGLTWAVGADGLSMP), 111 to 131 (LILLTSFITALAVLAAWPVTF), 133 to 153 (PKLFFFLILAMDGGQIAVFAV), 157 to 177 (LLFFLAWELELLPVYLLLAIW), 189 to 209 (FILYTAGSSLFILLAALAMGF), 230 to 250 (GFELLCYAGLLIAFGVKLPIV), 264 to 284 (TAPVHMLLAGILLKMGGYALM), 298 to 318 (FAPLLVVLGVVNIIYAALTSF), 327 to 347 (IAYSSISHMGFVLIGIGSFSE), 353 to 373 (AMLQMISHGLIGASLFFLVGA), 397 to 417 (FALWTVCCLASLALPGMSGFV), 438 to 458 (IVIDGLAAIGVILTPIYLLSM), and 485 to 505 (VYIIGCLLVPIIGIGLYPKLM).

The protein belongs to the complex I subunit 4 family.

It is found in the cellular thylakoid membrane. The enzyme catalyses a plastoquinone + NADH + (n+1) H(+)(in) = a plastoquinol + NAD(+) + n H(+)(out). It carries out the reaction a plastoquinone + NADPH + (n+1) H(+)(in) = a plastoquinol + NADP(+) + n H(+)(out). NDH-1 shuttles electrons from NAD(P)H, via FMN and iron-sulfur (Fe-S) centers, to quinones in the respiratory chain. The immediate electron acceptor for the enzyme in this species is believed to be plastoquinone. Couples the redox reaction to proton translocation (for every two electrons transferred, four hydrogen ions are translocated across the cytoplasmic membrane), and thus conserves the redox energy in a proton gradient. This chain is NAD(P)H-quinone oxidoreductase chain 4, found in Synechococcus sp. (strain CC9311).